A 617-amino-acid chain; its full sequence is Glutamyl-tRNA(Gln) amidotransferase subunit B, mitochondrial (617 aa).

A mitochondrion-targeting transit peptide spans 1 to 56; that stretch reads MPRIPTSVLGKYLLSGQISRQGCVGARQITRHSALPSAAVSVANSARLLHVSSETV. The segment at 53–90 is disordered; that stretch reads SETVPPPPAQPVPLRKQLKDEAKKAKKQGKKKSKGDSQ. The segment covering 76-85 has biased composition (basic residues); sequence KAKKQGKKKS.

The protein belongs to the GatB/GatE family. GatB subfamily. As to quaternary structure, subunit of the heterotrimeric GatCAB amidotransferase (AdT) complex, composed of A, B and C subunits.

It is found in the mitochondrion. It catalyses the reaction L-glutamyl-tRNA(Gln) + L-glutamine + ATP + H2O = L-glutaminyl-tRNA(Gln) + L-glutamate + ADP + phosphate + H(+). In terms of biological role, allows the formation of correctly charged Gln-tRNA(Gln) through the transamidation of misacylated Glu-tRNA(Gln) in the mitochondria. The reaction takes place in the presence of glutamine and ATP through an activated gamma-phospho-Glu-tRNA(Gln). This chain is Glutamyl-tRNA(Gln) amidotransferase subunit B, mitochondrial, found in Fusarium vanettenii (strain ATCC MYA-4622 / CBS 123669 / FGSC 9596 / NRRL 45880 / 77-13-4) (Fusarium solani subsp. pisi).